Here is a 514-residue protein sequence, read N- to C-terminus: Peptide chain release factor 3 (514 aa).

In terms of domain architecture, tr-type G spans 8–268 (KKRRTFAIIS…SFLAFAPEPH (261 aa)). GTP is bound by residues 17-24 (SHPDAGKT), 85-89 (DTPGH), and 139-142 (NKLD).

Belongs to the TRAFAC class translation factor GTPase superfamily. Classic translation factor GTPase family. PrfC subfamily.

It is found in the cytoplasm. Functionally, increases the formation of ribosomal termination complexes and stimulates activities of RF-1 and RF-2. It binds guanine nucleotides and has strong preference for UGA stop codons. It may interact directly with the ribosome. The stimulation of RF-1 and RF-2 is significantly reduced by GTP and GDP, but not by GMP. This chain is Peptide chain release factor 3, found in Streptococcus mutans serotype c (strain ATCC 700610 / UA159).